The following is a 245-amino-acid chain: Demethylmenaquinone methyltransferase (245 aa).

S-adenosyl-L-methionine contacts are provided by residues Thr58, Asp79, and 106–107 (NA).

This sequence belongs to the class I-like SAM-binding methyltransferase superfamily. MenG/UbiE family.

The enzyme catalyses a 2-demethylmenaquinol + S-adenosyl-L-methionine = a menaquinol + S-adenosyl-L-homocysteine + H(+). It participates in quinol/quinone metabolism; menaquinone biosynthesis; menaquinol from 1,4-dihydroxy-2-naphthoate: step 2/2. Its function is as follows. Methyltransferase required for the conversion of demethylmenaquinol (DMKH2) to menaquinol (MKH2). The protein is Demethylmenaquinone methyltransferase of Halalkalibacterium halodurans (strain ATCC BAA-125 / DSM 18197 / FERM 7344 / JCM 9153 / C-125) (Bacillus halodurans).